The sequence spans 369 residues: Phosphoribosylformylglycinamidine cyclo-ligase (369 aa).

The disordered stretch occupies residues 1-22; it reads MSKRDTSQPKTGQPKTSKRRNG.

Belongs to the AIR synthase family.

Its subcellular location is the cytoplasm. The enzyme catalyses 2-formamido-N(1)-(5-O-phospho-beta-D-ribosyl)acetamidine + ATP = 5-amino-1-(5-phospho-beta-D-ribosyl)imidazole + ADP + phosphate + H(+). It participates in purine metabolism; IMP biosynthesis via de novo pathway; 5-amino-1-(5-phospho-D-ribosyl)imidazole from N(2)-formyl-N(1)-(5-phospho-D-ribosyl)glycinamide: step 2/2. The chain is Phosphoribosylformylglycinamidine cyclo-ligase from Mesorhizobium japonicum (strain LMG 29417 / CECT 9101 / MAFF 303099) (Mesorhizobium loti (strain MAFF 303099)).